We begin with the raw amino-acid sequence, 249 residues long: MKIKVINPNTTLAMTKGIEHAAKSAARSDTQIVAVSPKMGPASIESYYDEYLSIPGVIEEIKKGEEEGVDAFVIACWGDPGLHAAREVTDKPVVGIAESSVYLASMLAARFSVVTVLPRIKTMLEDLVDSYGMQKRVLNIRTTPMGVLDFERDPEAGIEMLRQEGKRAVEEDNAEAILLGCAGMAEFADSLEKELGVPVIDGVVAGVKFAETIVDLGKKTSKLKTYKYPEKKEYVGALENFGRNQTTTK.

This sequence belongs to the HyuE racemase family. Homohexamer.

It carries out the reaction a D-5-monosubstituted hydantoin = a L-5-monosubstituted hydantoin. The catalysed reaction is D-5-[2-(methylsulfanyl)ethyl]hydantoin = L-5-[2-(methysulfanyl)ethyl]hydantoin. It catalyses the reaction D-5-benzylhydantoin = L-5-benzylhydantoin. The enzyme catalyses D-5-isopropylhydantoin = L-5-isopropylhydantoin. It carries out the reaction D-5-isobutylhydantoin = L-5-isobutylhydantoin. Its activity is regulated as follows. Strongly inhibited by Cu(2+) and Zn(2+). Slightly stimulated by the addition of Mn(2+) or Co(2+), but also by metal-chelating agents such as EDTA or EGTA, indicating that the enzyme is not a metalloenzyme. In terms of biological role, involved in the asymmetric conversion of racemic 5-substituted hydantoins to the corresponding L-amino acids. Catalyzes the racemization via enolization of D- and L-5-monosubstituted hydantoins. Is able to racemize 5-substituted hydantoins having aromatic or aliphatic substituents such as 5-(2-methylthioethyl)hydantoin, 5-isopropylhydantoin, 5-isobutylhydantoin and 5-benzylhydantoin. This chain is Hydantoin racemase, found in Pseudomonas sp. (strain NS671).